A 363-amino-acid chain; its full sequence is MKIGVFIPIGNNGWLISETAPQYKPTFELNKTIVQKAEHYHFDFALSMIKLRGFGGKTEFWEHNMESFTLMAGLAAVTSRIQLYATAATLVMPPAIVARMAATIDSISNGRFGVNVVTGWQKPEYEQMGMWPGDDYFTRRYDYLTEYVSVLRDLWGTGHCTLDGEFFKMDDCRVSPRPQSEMKVICAGQSDAGMAFSAKHADFNFCFGKGVNTPTAFAPTAARMKTAADAENRDVSSYVLFMVIADETDEAARAKWELYKAGADAEALSWLTDQSSKDTRSGSDTNVRQMADPTSAVNINMGTLVGSWASVARMLDEIDTVPGAGGVLLTFDDFVEGIENFGRYIQPLMKTRQHIGIEQKEVA.

FMN contacts are provided by residues 49–50 (IK), N115, E124, 140–141 (RY), and S190.

Belongs to the NtaA/SnaA/DszA monooxygenase family. RutA subfamily.

The catalysed reaction is uracil + FMNH2 + NADH + O2 = (Z)-3-ureidoacrylate + FMN + NAD(+) + H2O + H(+). It catalyses the reaction thymine + FMNH2 + NADH + O2 = (Z)-2-methylureidoacrylate + FMN + NAD(+) + H2O + H(+). Catalyzes the pyrimidine ring opening between N-3 and C-4 by an unusual flavin hydroperoxide-catalyzed mechanism, adding oxygen atoms in the process to yield ureidoacrylate peracid, that immediately reacts with FMN forming ureidoacrylate and FMN-N(5)-oxide. The FMN-N(5)-oxide reacts spontaneously with NADH to produce FMN. Requires the flavin reductase RutF to regenerate FMN in vivo. This chain is Pyrimidine monooxygenase RutA, found in Pantoea ananatis (strain LMG 20103).